The following is a 377-amino-acid chain: Gap junction gamma-1 protein (377 aa).

The Cytoplasmic segment spans residues 1–18; it reads MSWSFLTRLLEEINNHST. Residues 19–39 form a helical membrane-spanning segment; it reads FVGKIWLTVLIIFRIVLTAVG. The Extracellular segment spans residues 40 to 75; the sequence is GESIYYDEQSKFTCNTHQPGCENVCYDAFAPLSHVR. A helical membrane pass occupies residues 76 to 96; it reads FWVFQIILITTPSIMYLGFAM. The Cytoplasmic segment spans residues 97–174; it reads HRIARQPDEQ…RRIKQDGLMK (78 aa). Residues 129 to 163 are disordered; it reads DYEEAEDNQEEDPMICEEEEPEKDSEKGDKKKHDG. A compositionally biased stretch (acidic residues) spans 131-151; the sequence is EEAEDNQEEDPMICEEEEPEK. Residues 175 to 197 form a helical membrane-spanning segment; the sequence is VYVLQLLFRSVFEVGFLMGQYVL. The Extracellular segment spans residues 198-228; it reads YGFEVIPFFVCSRNPCPHTVDCFVSRPTEKT. A helical membrane pass occupies residues 229–249; sequence IFLLIMYAVSALCLFLNLCEL. Residues 250-377 are Cytoplasmic-facing; sequence FHLGIGGIRD…GVGSREKSGL (128 aa). Disordered regions lie at residues 266–286 and 341–377; these read KEIQ…HSVL and AHAS…KSGL. Over residues 344–362 the composition is skewed to polar residues; the sequence is SRSSSPEANSIAAEQNRLN.

Belongs to the connexin family. Gamma-type subfamily. As to quaternary structure, a connexon is composed of a hexamer of connexins.

Its subcellular location is the cell membrane. It localises to the cell junction. The protein resides in the gap junction. One gap junction consists of a cluster of closely packed pairs of transmembrane channels, the connexons, through which materials of low MW diffuse from one cell to a neighboring cell. This Xenopus laevis (African clawed frog) protein is Gap junction gamma-1 protein (gjc1).